We begin with the raw amino-acid sequence, 407 residues long: D-galactonate dehydratase family member Pjdr2_1176 (407 aa).

Mg(2+) is bound at residue aspartate 208. Histidine 210 contributes to the D-arabinonate binding site. Mg(2+) contacts are provided by glutamate 234 and glutamate 260. Glutamate 260, arginine 281, and glutamate 337 together coordinate D-arabinonate.

This sequence belongs to the mandelate racemase/muconate lactonizing enzyme family. GalD subfamily.

Its function is as follows. Has no detectable activity with D-mannonate and with a panel of 70 other acid sugars (in vitro), in spite of the conservation of the residues that are expected to be important for catalytic activity and cofactor binding. May have evolved a divergent function. This chain is D-galactonate dehydratase family member Pjdr2_1176, found in Paenibacillus sp. (strain JDR-2).